Consider the following 443-residue polypeptide: EGF-containing fibulin-like extracellular matrix protein 2 (443 aa).

The N-terminal stretch at 1–27 (MLPFASCLPGSLLLWAFLLLLLGAASP) is a signal peptide. Residue Gln-28 is modified to Pyrrolidone carboxylic acid. The region spanning 36–81 (YTECTDGYEWDADSQHCRDVNECLTIPEACKGEMKCINHYGGYLCL) is the EGF-like 1; atypical domain. 18 cysteine pairs are disulfide-bonded: Cys-58/Cys-121, Cys-65/Cys-80, Cys-71/Cys-109, Cys-127/Cys-140, Cys-134/Cys-149, Cys-151/Cys-162, Cys-168/Cys-177, Cys-173/Cys-186, Cys-188/Cys-201, Cys-207/Cys-217, Cys-213/Cys-226, Cys-228/Cys-241, Cys-247/Cys-258, Cys-254/Cys-267, Cys-269/Cys-281, Cys-287/Cys-300, Cys-294/Cys-309, and Cys-315/Cys-327. The disordered stretch occupies residues 91 to 117 (LHGEGPPPPAAHAQQPNPCPQGYEPDE). Residues 123–163 (DVDECTQALHDCRPSQDCHNLPGSYQCTCPDGYRKIGPECV) enclose the EGF-like 2; calcium-binding domain. One can recognise an EGF-like 3; calcium-binding domain in the interval 164-202 (DIDECRYRYCQHRCVNLPGSFRCQCEPGFQLGPNNRSCV). Residue Asn-198 is glycosylated (N-linked (GlcNAc...) asparagine). The EGF-like 4; calcium-binding domain maps to 203-242 (DVNECDMGAPCEQRCFNSYGTFLCRCNQGYELHRDGFSCS). One can recognise an EGF-like 5; calcium-binding domain in the interval 243 to 282 (DIDECGYSSYLCQYRCVNEPGRFSCHCPQGYQLLATRLCQ). The region spanning 283–328 (DIDECETGAHQCSEAQTCVNFHGGYRCVDTNRCVEPYVQVSDNRCL) is the EGF-like 6; calcium-binding domain. Residue Asn-394 is glycosylated (N-linked (GlcNAc...) asparagine).

Belongs to the fibulin family. As to quaternary structure, homodimer; disulfide-linked. Multimer; allows heparin binding. Monomer. Binds preferentially to p53 mutants. Interacts with FBN1 (via N-terminal domain); this interaction inhibits EFEMP2 binding to LOX and ELN. Interacts with ELN with moderate affinity; this interaction regulates ELN self-assembly maturation stage. Interacts with PCOLCE. Interacts with collagen type IV trimer (COL4A1-COL4A1-COL4A2), NID2 and moderately with COL15A1-derived endostatin. Interacts with EMILIN1; this interaction promotes the incorporation of EFEMP2 into the extracellular matrix. Interacts with LTBP4; the LTBP4 long form (LTBP4L) has a stronger binding affinity than the LTBP4 short form and the LTBP4 long form promotes fibrillar deposition of EFEMP2. Interacts with LOX (via propeptide); this interaction is strong and facilitates formation of ternary complexes with ELN during elastic fiber assembly; this interaction limits interaction of EFEMP2 with FBLN5. Interacts with PITX2. Interacts with FBLN5 with moderate affinity. Interacts with LOXL1 (via propeptide), LTBP1 and TGFB1 stronger than with LOXL2 and LTBP3. In terms of processing, N-glycosylated; contains mostly complex-type glycans. Not O-glycosylated. Post-translationally, cleaved by ELANE; produces a 50-55 kDa fragment. Cleaved by MMP2 and MMP9; produces several fragments. In terms of tissue distribution, expressed in elastic fibers of the skin, near the dermal-epidermal junction, surrounding the hair follicles and throughout the dermis. Expressed in tendon around tenocytes. Prominently expressed in cartilage, bone, perichondrium and ligaments. Also detected in bone marrow stroma. Expressed in aorta, lung, and esophagus.

It is found in the secreted. It localises to the extracellular space. The protein localises to the extracellular matrix. Its subcellular location is the basement membrane. In terms of biological role, plays a crucial role in elastic fiber formation in tissue, and in the formation of ultrastructural connections between elastic laminae and smooth muscle cells in the aorta, therefore participates in terminal differentiation and maturation of smooth muscle cell (SMC) and in the mechanical properties and wall integrity maintenance of the aorta. In addition, is involved in the control of collagen fibril assembly in tissue throught proteolytic activation of LOX leading to cross- linking of collagen and elastin. Also promotes ELN coacervation and participates in the deposition of ELN coacervates on to microfibrils but also regulates ELN cross- linking through LOX interaction. Moreover adheres to the cells through heparin binding in a calcium-dependent manner and regulates vascularlar smooth muscle cells proliferation through angiotensin signaling. This is EGF-containing fibulin-like extracellular matrix protein 2 from Mus musculus (Mouse).